A 399-amino-acid chain; its full sequence is Argininosuccinate synthase (399 aa).

ATP contacts are provided by residues A10–S18 and A38. Y89 contributes to the L-citrulline binding site. Residue G119 coordinates ATP. L-aspartate is bound by residues T121, N125, and D126. Position 125 (N125) interacts with L-citrulline. R129, S177, S186, E262, and Y274 together coordinate L-citrulline.

Belongs to the argininosuccinate synthase family. Type 1 subfamily. In terms of assembly, homotetramer.

The protein localises to the cytoplasm. It carries out the reaction L-citrulline + L-aspartate + ATP = 2-(N(omega)-L-arginino)succinate + AMP + diphosphate + H(+). The protein operates within amino-acid biosynthesis; L-arginine biosynthesis; L-arginine from L-ornithine and carbamoyl phosphate: step 2/3. This is Argininosuccinate synthase from Picosynechococcus sp. (strain ATCC 27264 / PCC 7002 / PR-6) (Agmenellum quadruplicatum).